The chain runs to 178 residues: Ribonuclease M5 (178 aa).

Positions 10–94 (DGVIVCEGKT…YVDMNARLKN (85 aa)) constitute a Toprim domain. E16, D62, and D64 together coordinate Mg(2+).

Belongs to the ribonuclease M5 family. The cofactor is Mg(2+).

It localises to the cytoplasm. The enzyme catalyses Endonucleolytic cleavage of RNA, removing 21 and 42 nucleotides, respectively, from the 5'- and 3'-termini of a 5S-rRNA precursor.. Its function is as follows. Required for correct processing of both the 5' and 3' ends of 5S rRNA precursor. Cleaves both sides of a double-stranded region yielding mature 5S rRNA in one step. The polypeptide is Ribonuclease M5 (rnmV) (Mycoplasma genitalium (strain ATCC 33530 / DSM 19775 / NCTC 10195 / G37) (Mycoplasmoides genitalium)).